Reading from the N-terminus, the 188-residue chain is dCTP deaminase (188 aa).

DCTP contacts are provided by residues 111 to 116 (KSTYAR), 135 to 137 (TLE), Gln156, Tyr170, and Gln180. The active-site Proton donor/acceptor is the Glu137.

Belongs to the dCTP deaminase family. As to quaternary structure, homotrimer.

The enzyme catalyses dCTP + H2O + H(+) = dUTP + NH4(+). The protein operates within pyrimidine metabolism; dUMP biosynthesis; dUMP from dCTP (dUTP route): step 1/2. Functionally, catalyzes the deamination of dCTP to dUTP. This Pseudomonas fluorescens (strain Pf0-1) protein is dCTP deaminase.